The chain runs to 589 residues: Complement component C8 beta chain (589 aa).

The signal sequence occupies residues 1–31 (MKTGAQVWRALAKSCLLCAALGCLHLPGARG). The propeptide occupies 32-53 (EKPDFFETNAVNGSLVRSRPVR). N43 carries an N-linked (GlcNAc...) asparagine glycan. Positions 63 to 116 (DCQLSTWSSWTACDPCQKKRYRHTYLLRPSQFYGELCDFSDKEVEDCVTNRACR) constitute a TSP type-1 1 domain. Cystine bridges form between C64/C99, C75/C109, C78/C115, C121/C132, C126/C145, C139/C154, and C161/C199. C-linked (Man) tryptophan glycosylation is found at W69 and W72. Residues 120 to 155 (RCEGFVCAQTGRCVNRRLLCNGDNDCGDQSDEANCR) form the LDL-receptor class A domain. Ca(2+) is bound by residues L137, N140, D142, D144, D150, and E151. The MACPF domain maps to 157–503 (IYKKCSQDME…EFQMEVSSCR (347 aa)). N-linked (GlcNAc...) asparagine glycosylation occurs at N242. Beta stranded transmembrane passes span 251 to 258 (SSFKFGFK), 261 to 268 (GLVEFGVR), 378 to 385 (AGGGFQIG), and 391 to 398 (VYLKLGVS). C377 and C402 form a disulfide bridge. T417 bears the Phosphothreonine mark. Cystine bridges form between C502–C549, C504–C520, C507–C522, and C524–C533. Positions 504–534 (CAPCRNNGVPILKESRCECICPAGFQGVACE) constitute an EGF-like domain. The TSP type-1 2 domain maps to 544–587 (DGKWSCWSDWSPCSGGRKTRQRQCNNPAPQRGGSPCSGPASETL). W550 and W553 each carry a C-linked (Man) tryptophan glycan. C556 and C589 are oxidised to a cystine. Residues 556 to 589 (CSGGRKTRQRQCNNPAPQRGGSPCSGPASETLDC) form a disordered region.

The protein belongs to the complement C6/C7/C8/C9 family. Heterotrimer of 3 chains: alpha (C8A), beta (C8B) and gamma (C8G); the alpha and gamma chains are disulfide bonded. Component of the membrane attack complex (MAC), composed of complement C5b, C6, C7, C8A, C8B, C8G and multiple copies of the pore-forming subunit C9. Post-translationally, N-glycosylated; contains one or two bound glycans. Not O-glycosylated.

It localises to the secreted. Its subcellular location is the target cell membrane. With respect to regulation, membrane attack complex (MAC) assembly is inhibited by CD59, thereby protecting self-cells from damage during complement activation. CD59 acts by binding to the beta-haipins of C8 (C8A and C8B), forming an intermolecular beta-sheet that prevents incorporation of the multiple copies of C9 required for complete formation of the osmolytic pore. MAC assembly is also inhibited by clusterin (CLU) chaperones that inhibit polymerization of C9. In terms of biological role, component of the membrane attack complex (MAC), a multiprotein complex activated by the complement cascade, which inserts into a target cell membrane and forms a pore, leading to target cell membrane rupture and cell lysis. The MAC is initiated by proteolytic cleavage of C5 into complement C5b in response to the classical, alternative, lectin and GZMK complement pathways. The complement pathways consist in a cascade of proteins that leads to phagocytosis and breakdown of pathogens and signaling that strengthens the adaptive immune system. C8B, together with C8A and C8G, inserts into the target membrane, but does not form pores by itself. During MAC assembly, associates with C5b, C6 and C7 to form the C5b8 intermediate complex that inserts into the target membrane and traverses the bilayer increasing membrane rigidity. This is Complement component C8 beta chain (C8b) from Rattus norvegicus (Rat).